A 525-amino-acid chain; its full sequence is MERRGGGGRMLALLLAGLLGGARGFGDEEERRCDAIRIAMCQNLGYNVTKMPNLVGHELQADAELQLTTFTPLIQYGCSSQLQFFLCSVYVPMCTEKINIPIGPCGGMCLSVKRRCEPVLKEFGFAWPDSLNCSKFPPQNDHNHMCMEGPGDEEVPLHSKTSLQPGEECHSMGSNSDQYIWVKRNLDCVLKCGYDAGLYSRSAKEFTDIWMAVWASLCFISTAFTVLTFLIDSSRFSYPERPIIFLSMCYNIYSIAYIVRLTVGRERISCDFEEAAEPVLIQEGLKNTGCAIIFLLMYFFGMASSIWWVILTLTWFLAAGLKWGHEAIEMHSSYFHIAAWAIPAVKTIVILIMRLVDADELTGLCYVGNQNLDALTGFVVAPLFTYLVIGTLFIAAGLVALFKIRSNLQKDGTKTDKLERLMVKIGVFSVLYTVPATCVIACYFYEISNWAVFRYSADDSNMAVEMLKIFMSLLVGITSGMWIWSAKTLHTWQKCSNRLVNSGKVKREKRADGWVKPGKGNETVV.

A signal peptide spans 1 to 24 (MERRGGGGRMLALLLAGLLGGARG). Over 25–200 (FGDEEERRCD…KCGYDAGLYS (176 aa)) the chain is Extracellular. Residues 28–149 (EEERRCDAIR…NDHNHMCMEG (122 aa)) form the FZ domain. Intrachain disulfides connect Cys33–Cys94, Cys41–Cys87, Cys78–Cys116, Cys105–Cys146, Cys109–Cys133, Cys169–Cys188, Cys192–Cys270, and Cys290–Cys365. A glycan (N-linked (GlcNAc...) asparagine) is linked at Asn47. N-linked (GlcNAc...) asparagine glycosylation occurs at Asn132. Residues 201-231 (RSAKEFTDIWMAVWASLCFISTAFTVLTFLI) form a helical membrane-spanning segment. Topologically, residues 232–237 (DSSRFS) are cytoplasmic. A helical membrane pass occupies residues 238–263 (YPERPIIFLSMCYNIYSIAYIVRLTV). Residues 264-287 (GRERISCDFEEAAEPVLIQEGLKN) lie on the Extracellular side of the membrane. Residues 288–321 (TGCAIIFLLMYFFGMASSIWWVILTLTWFLAAGL) traverse the membrane as a helical segment. The Cytoplasmic segment spans residues 322–324 (KWG). Residues 325 to 353 (HEAIEMHSSYFHIAAWAIPAVKTIVILIM) form a helical membrane-spanning segment. Residues 354–371 (RLVDADELTGLCYVGNQN) are Extracellular-facing. The helical transmembrane segment at 372-406 (LDALTGFVVAPLFTYLVIGTLFIAAGLVALFKIRS) threads the bilayer. Over 407-419 (NLQKDGTKTDKLE) the chain is Cytoplasmic. A helical transmembrane segment spans residues 420-448 (RLMVKIGVFSVLYTVPATCVIACYFYEIS). The Extracellular segment spans residues 449 to 461 (NWAVFRYSADDSN). Residues 462–483 (MAVEMLKIFMSLLVGITSGMWI) traverse the membrane as a helical segment. Over 484–525 (WSAKTLHTWQKCSNRLVNSGKVKREKRADGWVKPGKGNETVV) the chain is Cytoplasmic. The Lys-Thr-X-X-X-Trp motif, mediates interaction with the PDZ domain of Dvl family members signature appears at 487–492 (KTLHTW). Residues 523 to 525 (TVV) carry the PDZ-binding motif.

This sequence belongs to the G-protein coupled receptor Fz/Smo family. Interacts (via FZ domain) with TSKU; TSKU competes with WNT2B for binding to FZD4, inhibiting Wnt signaling and repressing peripheral eye development. Expressed in the developing kidney, interdigital spaces and optic cup.

The protein resides in the cell membrane. Functionally, receptor for Wnt proteins. Most frizzled receptors are coupled to the beta-catenin canonical signaling pathway, which leads to the activation of disheveled proteins, inhibition of GSK-3 kinase, nuclear accumulation of beta-catenin and activation of Wnt target genes. A second signaling pathway involving PKC and calcium fluxes has been seen for some family members, but it is not yet clear if it represents a distinct pathway or if it can be integrated in the canonical pathway, as PKC seems to be required for Wnt-mediated inactivation of GSK-3 kinase. Both pathways seem to involve interactions with G-proteins. May be involved in transduction and intercellular transmission of polarity information during tissue morphogenesis and/or in differentiated tissues. This chain is Frizzled-4 (FZD4), found in Gallus gallus (Chicken).